The sequence spans 100 residues: Urease subunit gamma (100 aa).

Belongs to the urease gamma subunit family. Heterotrimer of UreA (gamma), UreB (beta) and UreC (alpha) subunits. Three heterotrimers associate to form the active enzyme.

It localises to the cytoplasm. It catalyses the reaction urea + 2 H2O + H(+) = hydrogencarbonate + 2 NH4(+). It participates in nitrogen metabolism; urea degradation; CO(2) and NH(3) from urea (urease route): step 1/1. This chain is Urease subunit gamma, found in Pseudomonas aeruginosa (strain LESB58).